A 153-amino-acid chain; its full sequence is uncharacterized protein (153 aa).

The tract at residues 16-40 is disordered; sequence DEQTPLLNNDGIQRTPPSAEADMSL. Polar residues predominate over residues 20–31; that stretch reads PLLNNDGIQRTP.

This is an uncharacterized protein from Schizosaccharomyces pombe (strain 972 / ATCC 24843) (Fission yeast).